We begin with the raw amino-acid sequence, 498 residues long: MGINPTTSGPEVSSREKKNLGHIVQIIGPVLDVAFPPGKMPNIYNALVVKGRDTVGQQINVTCEVQQLLGNNRVRAVAMSATDGLMRGMEVIDTGTPLSVPVGGATLGRIFNVLGEPIDNLGPVDTRTTSPIHRSAPTFIQLDTKLSIFETGIKVVDLLAPYRRGGKIGLFGGAGVGKTVLIMELINNIAKAHGGVSVFGGVGERTREGNDLYMEMKESGVINEQNIAESKVALVYGQMNEPPGARMRVGLTALTMAEYFRDVNEQDVLLFIDNIFRFVQAGSEVSALLGRMPSAVGYQPTLSTEMGSLQERITSTKEGSITSIQAVYVPADDLTDPAPATTFAHLDATTVLSRGLAAKGIYPAVDPLDSTSTMLQPRIVGEEHYETAQRVKQTLQRYKELQDIIAILGLDELSEEDRLTVARARKIERFLSQPFFVAEVFTGSAGKYVGLVETIRGFNLILSGELDSLPEQAFYLVGNIDEATAKATNLEMESNLKK.

Residue 172 to 179 (GGAGVGKT) participates in ATP binding.

This sequence belongs to the ATPase alpha/beta chains family. In terms of assembly, F-type ATPases have 2 components, CF(1) - the catalytic core - and CF(0) - the membrane proton channel. CF(1) has five subunits: alpha(3), beta(3), gamma(1), delta(1), epsilon(1). CF(0) has four main subunits: a(1), b(1), b'(1) and c(9-12).

The protein localises to the plastid. It localises to the chloroplast thylakoid membrane. The enzyme catalyses ATP + H2O + 4 H(+)(in) = ADP + phosphate + 5 H(+)(out). Produces ATP from ADP in the presence of a proton gradient across the membrane. The catalytic sites are hosted primarily by the beta subunits. The sequence is that of ATP synthase subunit beta, chloroplastic from Phaseolus vulgaris (Kidney bean).